The sequence spans 113 residues: Large ribosomal subunit protein bL19 (113 aa).

This sequence belongs to the bacterial ribosomal protein bL19 family.

Its function is as follows. This protein is located at the 30S-50S ribosomal subunit interface and may play a role in the structure and function of the aminoacyl-tRNA binding site. This chain is Large ribosomal subunit protein bL19, found in Mycobacterium sp. (strain JLS).